The following is a 70-amino-acid chain: UPF0352 protein PBPRA2586 (70 aa).

The protein belongs to the UPF0352 family.

The polypeptide is UPF0352 protein PBPRA2586 (Photobacterium profundum (strain SS9)).